Here is a 753-residue protein sequence, read N- to C-terminus: Glycerophosphodiester phosphodiesterase GDPDL6 (753 aa).

A signal peptide spans 1–17 (MLRFFILFSLFLHSSVA). GP-PDE domains lie at 41 to 339 (PAVV…SQSI) and 355 to 654 (ALVI…TRYL). Residues Asn304, Asn516, Asn603, and Asn715 are each glycosylated (N-linked (GlcNAc...) asparagine). Residues 707 to 729 (PPVAKLASNGTEGGPPQTPPRSG) are disordered. Residues 731–751 (VAIAANLSLSLLAMMALGLLY) traverse the membrane as a helical segment.

This sequence belongs to the glycerophosphoryl diester phosphodiesterase family. In terms of tissue distribution, expressed in flowers and siliques.

The protein localises to the membrane. The catalysed reaction is a sn-glycero-3-phosphodiester + H2O = an alcohol + sn-glycerol 3-phosphate + H(+). The protein is Glycerophosphodiester phosphodiesterase GDPDL6 of Arabidopsis thaliana (Mouse-ear cress).